Reading from the N-terminus, the 177-residue chain is dCTP deaminase, dUMP-forming (177 aa).

Residues 98–103, Asn110, 115–118, 123–125, Gln144, 157–160, and Gln164 contribute to the dCTP site; these read RSSVGR, DPGF, TLE, and YQGK. Catalysis depends on Glu125, which acts as the Proton donor/acceptor.

Belongs to the dCTP deaminase family. In terms of assembly, homotrimer. Requires Mg(2+) as cofactor.

It carries out the reaction dCTP + 2 H2O = dUMP + NH4(+) + diphosphate. It functions in the pathway pyrimidine metabolism; dUMP biosynthesis; dUMP from dCTP: step 1/1. Its activity is regulated as follows. Inhibited by dTTP. In terms of biological role, bifunctional enzyme that catalyzes both the deamination of dCTP to dUTP and the hydrolysis of dUTP to dUMP without releasing the toxic dUTP intermediate. This is dCTP deaminase, dUMP-forming from Halalkalibacterium halodurans (strain ATCC BAA-125 / DSM 18197 / FERM 7344 / JCM 9153 / C-125) (Bacillus halodurans).